We begin with the raw amino-acid sequence, 282 residues long: Sulfur carrier protein FdhD (282 aa).

Cys-115 serves as the catalytic Cysteine persulfide intermediate.

The protein belongs to the FdhD family.

Its subcellular location is the cytoplasm. Functionally, required for formate dehydrogenase (FDH) activity. Acts as a sulfur carrier protein that transfers sulfur from IscS to the molybdenum cofactor prior to its insertion into FDH. The protein is Sulfur carrier protein FdhD of Streptomyces avermitilis (strain ATCC 31267 / DSM 46492 / JCM 5070 / NBRC 14893 / NCIMB 12804 / NRRL 8165 / MA-4680).